Reading from the N-terminus, the 620-residue chain is Glutathione-regulated potassium-efflux system protein KefC (620 aa).

12 helical membrane-spanning segments follow: residues 4-24 (HTLL…PIAV), 26-46 (LGLG…PWGL), 54-74 (SILH…GLEL), 90-110 (GALQ…FLGL), 114-134 (VAEL…MQAM), 149-169 (FAVL…IPLL), 178-198 (LGAF…VVLL), 218-238 (VFSA…EEVG), 270-290 (GLLL…GTLV), 294-314 (LRIL…LWLV), 327-347 (WFAV…GAAQ), and 359-379 (ALTL…VLLT). In terms of domain architecture, RCK N-terminal spans 399 to 518 (QPRVIVAGFG…AGVAMPERET (120 aa)). A disordered region spans residues 599–620 (QGTAEGKHSGEAADEPEVKPSI).

Belongs to the monovalent cation:proton antiporter 2 (CPA2) transporter (TC 2.A.37) family. KefC subfamily. As to quaternary structure, homodimer. Interacts with the regulatory subunit KefF.

Its subcellular location is the cell inner membrane. Its function is as follows. Pore-forming subunit of a potassium efflux system that confers protection against electrophiles. Catalyzes K(+)/H(+) antiport. The polypeptide is Glutathione-regulated potassium-efflux system protein KefC (Salmonella dublin (strain CT_02021853)).